The sequence spans 434 residues: Protein HEAT INTOLERANT 4 (434 aa).

The Nuclear localization signal 1 signature appears at 1–8 (MKKGAKRK). A compositionally biased stretch (basic residues) spans 1 to 15 (MKKGAKRKGVSKAGR). The tract at residues 1-131 (MKKGAKRKGV…PVPKAKKPRA (131 aa)) is disordered. Residues 30 to 53 (ETTKTTQEESQQHEEEVVDEVKEN) are compositionally biased toward basic and acidic residues. Residues 54 to 82 (GEEEEAKGDQEEEEDAKPDSLEEDEENQE) show a composition bias toward acidic residues. A compositionally biased stretch (basic and acidic residues) spans 83-98 (DEVKAEEVKEEVEKKP). The Nuclear localization signal 2 motif lies at 95-102 (EKKPVARR). Basic residues predominate over residues 99–110 (VARRGGKRKRAT). Positions 111–122 (KKDTEIKDEKKP) are enriched in basic and acidic residues. Positions 363 to 394 (VKEQVRAAKKANREAKDARKKAIEEMSEDTKQ) form a coiled coil. Positions 370–377 (AKKANREA) match the Nuclear localization signal 3 motif.

The protein resides in the nucleus. The protein localises to the nucleolus. In terms of biological role, essential protein required for basal thermotolerance, especially during heat-induced chromocentre decondensation, thus regulating transcriptional gene silencing (TGS). This Arabidopsis thaliana (Mouse-ear cress) protein is Protein HEAT INTOLERANT 4.